Here is a 180-residue protein sequence, read N- to C-terminus: YY1-associated factor 2 (180 aa).

Disordered stretches follow at residues 1–24 (MGDKKSPTRPKRQPKPSSDEGYWD), 47–120 (GTST…EVTV), and 132–180 (EKTK…GESH). The RanBP2-type zinc finger occupies 19-48 (DEGYWDCSVCTFRNSAEAFKCMMCDVRKGT). A compositionally biased stretch (low complexity) spans 62–73 (QQVTQQFVPPTQ). The span at 74–93 (SKKEKKDKVEKEKSEKETTS) shows a compositional bias: basic and acidic residues. A compositionally biased stretch (basic residues) spans 95-105 (KNSHKKTRPRL). Composition is skewed to low complexity over residues 136–156 (SPPASSAASADQHSQSGSSSD) and 163–174 (SRSSSPRGEASS). Ser-167 carries the phosphoserine modification.

In terms of assembly, interacts with MYC, MYCN, RNF2/RING1B and YY1. Part of the E2F6.com-1 complex in G0 phase composed of E2F6, MGA, MAX, TFDP1, CBX3, BAT8, EUHMTASE1, RING1, RNF2, MBLR, L3MBTL2 and YAF2.

The protein localises to the nucleus. In terms of biological role, binds to MYC and inhibits MYC-mediated transactivation. Also binds to MYCN and enhances MYCN-dependent transcriptional activation. Increases calpain 2-mediated proteolysis of YY1 in vitro. Component of the E2F6.com-1 complex, a repressive complex that methylates 'Lys-9' of histone H3, suggesting that it is involved in chromatin-remodeling. The protein is YY1-associated factor 2 (YAF2) of Homo sapiens (Human).